Here is a 307-residue protein sequence, read N- to C-terminus: Taste receptor type 2 member 106 (307 aa).

Residues 1–7 are Extracellular-facing; sequence MLTIPEG. A helical transmembrane segment spans residues 8-28; sequence ILLCFITSGSVLGVLGNGFIL. Residues 29 to 41 lie on the Cytoplasmic side of the membrane; sequence HVNCTDCVRQKFS. The helical transmembrane segment at 42 to 62 threads the bilayer; that stretch reads TTGFIFTGLAISRICVICIII. The Extracellular portion of the chain corresponds to 63–81; that stretch reads SDGYLKLFSPHMVASDAHI. Residues 82 to 104 form a helical membrane-spanning segment; sequence IGISYLWIITNHTSTCFATILNL. The Cytoplasmic portion of the chain corresponds to 105–124; that stretch reads FYFLKIANFSHYIFFCLKRK. A helical transmembrane segment spans residues 125-145; that stretch reads LNTIFIFLLGCLFISWSVAFP. Residues 146–179 are Extracellular-facing; sequence QTVKIFNDKMKHRNTSWKFHLHKSKFIINHILLN. A glycan (N-linked (GlcNAc...) asparagine) is linked at asparagine 159. A helical transmembrane segment spans residues 180–200; the sequence is LGVIFFCMVAIITSFLLIISL. At 201-227 the chain is on the cytoplasmic side; that stretch reads WKHNRKMQLYVSRFKSLNTEVHLKVMK. The helical transmembrane segment at 228-248 threads the bilayer; that stretch reads VLISFIILLILHVIGILIETL. The Extracellular segment spans residues 249–257; the sequence is SFLRYENKL. Residues 258 to 278 traverse the membrane as a helical segment; sequence LLILGLNFSSMYPCCHSFILI. Residues 279–307 lie on the Cytoplasmic side of the membrane; the sequence is LANNQLKQASLKALKQFKCHKKDKDVRET.

Belongs to the G-protein coupled receptor T2R family.

The protein resides in the membrane. Its function is as follows. Putative taste receptor which may play a role in the perception of bitterness. This chain is Taste receptor type 2 member 106, found in Rattus norvegicus (Rat).